The primary structure comprises 325 residues: Glutarate 2-hydroxylase (325 aa).

Residues His-160, Asp-162, and His-292 each contribute to the Fe cation site.

This sequence belongs to the glutarate hydroxylase family. In terms of assembly, homotetramer. It depends on Fe(2+) as a cofactor.

It carries out the reaction glutarate + 2-oxoglutarate + O2 = (S)-2-hydroxyglutarate + succinate + CO2. Its pathway is amino-acid degradation. Acts as an alpha-ketoglutarate-dependent dioxygenase catalyzing hydroxylation of glutarate (GA) to L-2-hydroxyglutarate (L2HG). Functions in a L-lysine degradation pathway that proceeds via cadaverine, glutarate and L-2-hydroxyglutarate. In Escherichia fergusonii (strain ATCC 35469 / DSM 13698 / CCUG 18766 / IAM 14443 / JCM 21226 / LMG 7866 / NBRC 102419 / NCTC 12128 / CDC 0568-73), this protein is Glutarate 2-hydroxylase.